Here is a 542-residue protein sequence, read N- to C-terminus: Monocarboxylate transporter 3 (542 aa).

Residues 1–19 (MGRADPEEGQLPAPVKPPD) lie on the Cytoplasmic side of the membrane. Residues 20 to 40 (GGWGWIVLFGCFVITGFSYAF) traverse the membrane as a helical segment. Residues 41–63 (PKAVSVYFKELMKDFHVGYSDTA) are Extracellular-facing. A helical membrane pass occupies residues 64–84 (WISSIMLAMLYGTGPVCSIMV). The Cytoplasmic portion of the chain corresponds to 85-93 (NQFGCRPVM). The helical transmembrane segment at 94-114 (LIGGLLASSGMILASFTTNII) threads the bilayer. Topologically, residues 115-119 (ELYLT) are extracellular. Residues 120-140 (AGVLTGLGMALNFQPSLIMLG) traverse the membrane as a helical segment. Residues 141–152 (TYFDKRRPLANG) lie on the Cytoplasmic side of the membrane. Residues 153-173 (LAAAGSPVFLSSLSPLGQVLL) traverse the membrane as a helical segment. At 174 to 181 (EKFGWRGG) the chain is on the extracellular side. The chain crosses the membrane as a helical span at residues 182–202 (FLIMGGLLLNCCTCGAVMRPL). Residues 203–265 (DAGMKRKTEK…LDFSIFSNRG (63 aa)) are Cytoplasmic-facing. The tract at residues 226–247 (GGKSEEGISTTDGTKKTKKAKK) is disordered. A helical transmembrane segment spans residues 266 to 286 (FIIYTISKFILVLGLFVPPIL). At 287-301 (LVNYAKDTGVPDTEA) the chain is on the extracellular side. A helical membrane pass occupies residues 302-322 (AFLLSIIGFIDIFARPACGMV). Residues 323–330 (AGLKWVRP) are Cytoplasmic-facing. A helical transmembrane segment spans residues 331 to 351 (HVAYLFSFAMLFNGLTDICSA). The Extracellular portion of the chain corresponds to 352–357 (RASNYT). Residues 358-378 (GLVIFCVFFGISYGMVGALQF) form a helical membrane-spanning segment. Residues 379-392 (EVLMAIVGSQKFSS) are Cytoplasmic-facing. A helical membrane pass occupies residues 393 to 413 (AIGLVLLIEAFAVLIGPPSAG). Residues 414–423 (RLVDALKNYE) are Extracellular-facing. The helical transmembrane segment at 424-444 (VIFYLAGSEVVLSALFLAMAT) threads the bilayer. Residues 445 to 542 (YCCLNRGKKT…ADQTVERDSF (98 aa)) are Cytoplasmic-facing. Residues 453 to 542 (KTPPPEKNPS…ADQTVERDSF (90 aa)) form a disordered region. 2 basolateral sorting signal regions span residues 465-510 (GGSD…VEDE) and 511-532 (QSGE…AGCN). The span at 468–478 (DTEEAESDVQE) shows a compositional bias: acidic residues.

It belongs to the major facilitator superfamily. Monocarboxylate porter (TC 2.A.1.13) family. Retinal pigment epithelium.

It localises to the basolateral cell membrane. It catalyses the reaction (S)-lactate(in) + H(+)(in) = (S)-lactate(out) + H(+)(out). Probable retinal pigment epithelium (RPE)-specific proton-coupled L-lactate transporter. May facilitate transport of lactate and H(+) out of the retina and could therefore play a role in pH and ion homeostasis of the outer retina. This is Monocarboxylate transporter 3 (SLC16A8) from Gallus gallus (Chicken).